A 91-amino-acid chain; its full sequence is MIYYLSYIRNGGQFMHTFLIVLLIIDCIALITVVLLQEGKSSGLSGAISGGAEQLFGKQKQRGVDLFLNRLTIILSILFFVLMICISYLGM.

2 helical membrane passes run 16–36 (HTFL…VVLL) and 71–91 (LTII…YLGM).

The protein belongs to the SecG family. In terms of assembly, component of the Sec protein translocase complex. Heterotrimer consisting of SecY, SecE and SecG subunits. The heterotrimers can form oligomers, although 1 heterotrimer is thought to be able to translocate proteins. Interacts with SecDF, and other proteins may be involved. The channel interacts with SecA via subunit SecY. Also part of the accessory SecA2/SecY2 protein translocation apparatus required to export cell wall protein GspB.

The protein localises to the cell membrane. Its function is as follows. Subunit of the protein translocation channel SecYEG. While not essential, it considerably increases the export efficiency of extracellular proteins. In Staphylococcus aureus (strain NCTC 8325 / PS 47), this protein is Protein translocase subunit SecG.